A 164-amino-acid chain; its full sequence is Sec-independent protein translocase protein TatB (164 aa).

A helical transmembrane segment spans residues 1–21; sequence MIDIGLSKMALIGAVALIVIG. Positions 81 to 102 are disordered; the sequence is ASEFQKDWESGTSDAAATGHDG.

The protein belongs to the TatB family. As to quaternary structure, the Tat system comprises two distinct complexes: a TatABC complex, containing multiple copies of TatA, TatB and TatC subunits, and a separate TatA complex, containing only TatA subunits. Substrates initially bind to the TatABC complex, which probably triggers association of the separate TatA complex to form the active translocon.

The protein localises to the cell inner membrane. Functionally, part of the twin-arginine translocation (Tat) system that transports large folded proteins containing a characteristic twin-arginine motif in their signal peptide across membranes. Together with TatC, TatB is part of a receptor directly interacting with Tat signal peptides. TatB may form an oligomeric binding site that transiently accommodates folded Tat precursor proteins before their translocation. The sequence is that of Sec-independent protein translocase protein TatB from Paracidovorax citrulli (strain AAC00-1) (Acidovorax citrulli).